A 223-amino-acid chain; its full sequence is Small ribosomal subunit protein uS3 (223 aa).

The region spanning 39–108 (IRNFVKKNSY…NILINIVEVK (70 aa)) is the KH type-2 domain.

Belongs to the universal ribosomal protein uS3 family. In terms of assembly, part of the 30S ribosomal subunit. Forms a tight complex with proteins S10 and S14.

Functionally, binds the lower part of the 30S subunit head. Binds mRNA in the 70S ribosome, positioning it for translation. This is Small ribosomal subunit protein uS3 from Clostridium botulinum (strain 657 / Type Ba4).